The following is a 431-amino-acid chain: Anaerobic glycerol-3-phosphate dehydrogenase subunit B (431 aa).

This sequence belongs to the anaerobic G-3-P dehydrogenase subunit B family. As to quaternary structure, composed of a catalytic GlpA/B dimer and of membrane bound GlpC. It depends on FMN as a cofactor.

The catalysed reaction is a quinone + sn-glycerol 3-phosphate = dihydroxyacetone phosphate + a quinol. It functions in the pathway polyol metabolism; glycerol degradation via glycerol kinase pathway; glycerone phosphate from sn-glycerol 3-phosphate (anaerobic route): step 1/1. Functionally, conversion of glycerol 3-phosphate to dihydroxyacetone. Uses fumarate or nitrate as electron acceptor. This chain is Anaerobic glycerol-3-phosphate dehydrogenase subunit B, found in Mannheimia succiniciproducens (strain KCTC 0769BP / MBEL55E).